The chain runs to 476 residues: Cysteine--tRNA ligase (476 aa).

Cysteine 28 serves as a coordination point for Zn(2+). The 'HIGH' region motif lies at 30-40 (PTVYDHTHLGH). Zn(2+) contacts are provided by cysteine 208, histidine 233, and glutamate 237. Positions 265–269 (KMSKS) match the 'KMSKS' region motif. An ATP-binding site is contributed by lysine 268.

Belongs to the class-I aminoacyl-tRNA synthetase family. The cofactor is Zn(2+).

Its subcellular location is the cytoplasm. The enzyme catalyses tRNA(Cys) + L-cysteine + ATP = L-cysteinyl-tRNA(Cys) + AMP + diphosphate. In Methanococcus maripaludis (strain C7 / ATCC BAA-1331), this protein is Cysteine--tRNA ligase.